Reading from the N-terminus, the 227-residue chain is uncharacterized protein (227 aa).

17–24 is a binding site for ATP; that stretch reads GKTGCGKT.

This is an uncharacterized protein from Methanocaldococcus jannaschii (strain ATCC 43067 / DSM 2661 / JAL-1 / JCM 10045 / NBRC 100440) (Methanococcus jannaschii).